A 111-amino-acid polypeptide reads, in one-letter code: MKKIEAIIKPFKLDEVRSPSGVGLQGITVTEAKGFGRQKGHTELYRGAEYVVDFLPKVKVEVVLADENAEAVIEAIRKAAQTGRIGDGKIFVSNVEEVIRIRTGETGIDAI.

At tyrosine 50 the chain carries O-UMP-tyrosine.

This sequence belongs to the P(II) protein family. In terms of assembly, homotrimer.

Functionally, in nitrogen-limiting conditions, when the ratio of Gln to 2-ketoglutarate decreases, P-II is uridylylated to P-II-UMP. P-II-UMP allows the deadenylation of glutamine synthetase (GS), thus activating the enzyme. Conversely, in nitrogen excess P-II is deuridylated and promotes the adenylation of GS. P-II indirectly controls the transcription of the GS gene (glnA). P-II prevents NR-II-catalyzed conversion of NR-I to NR-I-phosphate, the transcriptional activator of glnA. When P-II is uridylylated to P-II-UMP, these events are reversed. The chain is Nitrogen regulatory protein P-II (glnB) from Rhizobium leguminosarum bv. viciae.